The chain runs to 329 residues: Endo-beta-N-acetylglucosaminidase F3 (329 aa).

The or 40, or 41 signal peptide spans 1 to 39 (MKKIFFAQCSILLLMLGSCSKMTEDMTPESVNKEASVKS). In terms of domain architecture, GH18 spans 48 to 329 (GVCIAYYITD…ANAVRDAVKN (282 aa)). Threonine 88 carries O-linked (Man...) threonine glycosylation. The active-site Proton donor is the glutamate 167.

This sequence belongs to the glycosyl hydrolase 18 family. In terms of assembly, monomer. Post-translationally, carbohydrate at Thr-88 consists of (2-OMe)Man1-4GlcNAcU1-4GlcU1-4Glc1-4(2-OMe)GlcU1-4[(2-OMe)Rham1-2]Man.

The protein resides in the secreted. It catalyses the reaction an N(4)-(oligosaccharide-(1-&gt;3)-[oligosaccharide-(1-&gt;6)]-beta-D-Man-(1-&gt;4)-beta-D-GlcNAc-(1-&gt;4)-alpha-D-GlcNAc)-L-asparaginyl-[protein] + H2O = an oligosaccharide-(1-&gt;3)-[oligosaccharide-(1-&gt;6)]-beta-D-Man-(1-&gt;4)-D-GlcNAc + N(4)-(N-acetyl-beta-D-glucosaminyl)-L-asparaginyl-[protein]. Endohydrolysis of the di-N-acetylchitobiosyl unit in high-mannose glycopeptides and glycoproteins. Hydrolyzes bi- and triantennary glycans. The presence of a core-bound fucose greatly augments endo F3 activity on biantennary and, presumably, triantennary oligosaccharides. The sequence is that of Endo-beta-N-acetylglucosaminidase F3 (endOF3) from Elizabethkingia meningoseptica (Chryseobacterium meningosepticum).